The primary structure comprises 196 residues: Peptide methionine sulfoxide reductase (196 aa).

Polar residues predominate over residues 1 to 14; sequence MEGNNSSSKSTTNP. Positions 1-23 are disordered; sequence MEGNNSSSKSTTNPALDPDLDSP.

Belongs to the MsrA Met sulfoxide reductase family.

The enzyme catalyses L-methionyl-[protein] + [thioredoxin]-disulfide + H2O = L-methionyl-(S)-S-oxide-[protein] + [thioredoxin]-dithiol. It catalyses the reaction [thioredoxin]-disulfide + L-methionine + H2O = L-methionine (S)-S-oxide + [thioredoxin]-dithiol. In terms of biological role, has an important function as a repair enzyme for proteins that have been inactivated by oxidation. Catalyzes the reversible oxidation-reduction of methionine sulfoxide in proteins to methionine. This chain is Peptide methionine sulfoxide reductase (E4), found in Solanum lycopersicum (Tomato).